A 770-amino-acid polypeptide reads, in one-letter code: ARF GTPase-activating protein GIT1 (770 aa).

Residues 1 to 124 form the Arf-GAP domain; it reads MSRKGPRAEV…AFVHKLPCRD (124 aa). Residues 1 to 124 are interaction with gamma-tubulin and localization to the centrosome; that stretch reads MSRKGPRAEV…AFVHKLPCRD (124 aa). The C4-type zinc-finger motif lies at 11–34; the sequence is CADCSAPDPGWASISRGVLVCDEC. ANK repeat units lie at residues 132 to 161, 166 to 195, and 199 to 228; these read DLSKQLHSSVRTGNLETCLRLLSLGAQANF, KGTTPLHVAAKAGQTLQAELLVVYGADPGS, and NGRTPIDYARQAGHHELAERLVECQYELTD. Tyr-224 is modified (phosphotyrosine). The interaction with PCLO stretch occupies residues 245 to 374; the sequence is HYIIPQMADR…QGKSLSSPTD (130 aa). An interaction with PTK2/FAK1 region spans residues 253-424; that stretch reads DRSRQKCMSQ…NRARSMDSSD (172 aa). Residues 254 to 376 form an interaction with ARHGEF7 region; it reads RSRQKCMSQS…KSLSSPTDNL (123 aa). The segment at 363-425 is disordered; that stretch reads RQQGKSLSSP…RARSMDSSDL (63 aa). Residues 366–383 show a composition bias toward polar residues; the sequence is GKSLSSPTDNLELSARNQ. A phosphoserine mark is found at Ser-368 and Ser-371. The residue at position 373 (Thr-373) is a Phosphothreonine. The tract at residues 375-596 is interaction with NCK2 and GRIN3A; that stretch reads NLELSARNQS…QEGSRHASKL (222 aa). The interval 375–596 is required for localization at synapses; the sequence is NLELSARNQS…QEGSRHASKL (222 aa). Phosphoserine is present on residues Ser-379 and Ser-384. The residue at position 392 (Tyr-392) is a Phosphotyrosine. Phosphoserine occurs at positions 394 and 397. Acidic residues predominate over residues 394-403; it reads SVASDEDTDQ. Thr-401 carries the post-translational modification Phosphothreonine. Residues Ser-419, Ser-422, and Ser-426 each carry the phosphoserine modification. The interval 420–475 is interaction with MAPK1; the sequence is MDSSDLSDGAVTLQEYLELKKALATSEAKVQQLMKVNSSLSDELRKLQREIHKLQA. Residues 429 to 629 form an interaction with IKBKG region; the sequence is AVTLQEYLEL…EGKRFLELSK (201 aa). Residues 449–483 adopt a coiled-coil conformation; sequence VQQLMKVNSSLSDELRKLQREIHKLQAENLQLRQP. Phosphoserine is present on residues Ser-507 and Ser-545. Residue Thr-546 is modified to Phosphothreonine. 2 positions are modified to phosphotyrosine: Tyr-554 and Tyr-563. Phosphoserine is present on residues Ser-570, Ser-580, Ser-601, and Ser-605. Residues 574–586 are compositionally biased toward low complexity; the sequence is VTFTPSSPLLSSS. The disordered stretch occupies residues 574–615; that stretch reads VTFTPSSPLLSSSQEGSRHASKLSRHGSGAESDYENTQSGEP. Thr-610 carries the phosphothreonine modification. A Phosphoserine modification is found at Ser-639. Residues 646-770 are interaction with PXN and TGFB1I1; sequence PGLPSTEDVI…VTITTREKKQ (125 aa).

In terms of assembly, forms homodimers and possibly oligomers. May form heterooligomers with GIT2. Interacts with G protein-coupled receptor kinases, including GRK2, GRK3, GRK5 and GRK6. Interacts with PPFIA1, PPFIA2 and PPFIA4. Interacts with GRIP1 and forms a ternary complex with PPFIA1 and GRIP1. Directly interacts with ARHGEF7/beta-PIX, forming in vitro a heptameric complex made of a GIT1 dimer and an ARHGEF7 trimer. Directly interacts with PXN/paxillin; this interaction is enhanced in the presence of ARHGEF7. Directly interacts (via C-terminus) with TGFB1I1/Hic-5 (via LD motif 3). Directly interacts with PTK2/FAK1. May interact with PTK2B/PYK2; this interaction may be indirect. Interacts with AMPA receptors GRIA2/3. Directly interacts with protein Piccolo/PCLO. Forms a complex with Ephrin-B1/EFNB1 and NCK2/GRB4 (via SH2); this interaction is important for spine morphogenesis and synapse formation. Interaction with NCK2 is transient and depends upon GIT1 phosphorylation at Tyr-392. Interacts with GRIN3A/GluN3A (via C-terminus); this interaction competes with GIT1 interaction with ARHGEF7 and limits synaptic localization of GIT1. Interacts with IKBKG/NEMO in resting bone mesenchymal stem cells, as well as in TNF-stimulated cells; this interaction may increase IKBKG affinity for 'Lys-63'-linked polyubiquitin chains. Interacts with GABA(A) receptors, including GABRB3 and GABRG2. Interacts with SCRIB. Interacts (via N- and C-terminus) with ENTR1/SDCCAG3 (via N-terminus); this interaction is direct. May form a tripartite complex with ENTR1 and PTPN13. Interacts with YWHAZ. Interacts with PAK1 and PAK3. Directly interacts (via N-terminus) with gamma-tubulin. Interacts with MAPK1 and MAPK3; this interaction is required for MAPK1/3 recruitment to focal adhesions. Phosphorylated on tyrosine residues by PTK2/FAK1 and SRC in growing fibroblasts. Phosphorylation at Tyr-392 is induced by activation of Ephrin-B1/EFNB1 and catalyzed by SRC family kinases. It is required for the interaction with NCK2 and for GIT1 recruitment to synapses in hippocampal neurons. Widely expressed. Expressed at high levels in testis (at protein level). Expressed in the brain, including in CA1 hippocampal neurons, in the amygdala, and thalamic nuclei (at protein level).

Its subcellular location is the cytoplasm. The protein localises to the synapse. The protein resides in the presynapse. It is found in the postsynapse. It localises to the postsynaptic density. Its subcellular location is the cell junction. The protein localises to the focal adhesion. The protein resides in the cell projection. It is found in the lamellipodium. It localises to the cytoskeleton. Its subcellular location is the microtubule organizing center. The protein localises to the centrosome. The protein resides in the spindle pole. Its function is as follows. GTPase-activating protein for ADP ribosylation factor family members, including ARF1. Multidomain scaffold protein that interacts with numerous proteins and therefore participates in many cellular functions, including receptor internalization, focal adhesion remodeling, and signaling by both G protein-coupled receptors and tyrosine kinase receptors. Through PAK1 activation, positively regulates microtubule nucleation during interphase. Plays a role in the regulation of cytokinesis; for this function, may act in a pathway also involving ENTR1 and PTPN13. May promote cell motility both by regulating focal complex dynamics and by the activation of RAC1. May act as scaffold for MAPK1/3 signal transduction, recruiting MAPK1/3 to focal adhesions after EGF stimulation via a Src-dependent pathway, hence stimulating cell migration. Plays a role in brain development and function. Involved in the regulation of spine density and synaptic plasticity that is required for processes involved in learning. Plays an important role in dendritic spine morphogenesis and synapse formation. In hippocampal neurons, recruits guanine nucleotide exchange factors (GEFs), such as ARHGEF7/beta-PIX, to the synaptic membrane. These in turn locally activate RAC1, which is an essential step for spine morphogenesis and synapse formation. May contribute to the organization of presynaptic active zones through oligomerization and formation of a Piccolo/PCLO-based protein network, which includes ARHGEF7/beta-PIX and FAK1. In neurons, through its interaction with liprin-alpha family members, may be required for AMPA receptor (GRIA2/3) proper targeting to the cell membrane. In complex with GABA(A) receptors and ARHGEF7, plays a crucial role in regulating GABA(A) receptor synaptic stability, maintaining GPHN/gephyrin scaffolds and hence GABAergic inhibitory synaptic transmission, by locally coordinating RAC1 and PAK1 downstream effector activity, leading to F-actin stabilization. May also be important for RAC1 downstream signaling pathway through PAK3 and regulation of neuronal inhibitory transmission at presynaptic input. Required for successful bone regeneration during fracture healing. The function in intramembranous ossification may, at least partly, exerted by macrophages in which GIT1 is a key negative regulator of redox homeostasis, IL1B production, and glycolysis, acting through the ERK1/2/NRF2/NFE2L2 axis. May also play a role in angiogenesis during fracture healing. In this process, may regulate activation of the canonical NF-kappa-B signal in bone mesenchymal stem cells by enhancing the interaction between NEMO and 'Lys-63'-ubiquitinated RIPK1/RIP1, eventually leading to enhanced production of VEGFA and others angiogenic factors. Essential for VEGF signaling through the activation of phospholipase C-gamma and ERK1/2, hence may control endothelial cell proliferation and angiogenesis. In Rattus norvegicus (Rat), this protein is ARF GTPase-activating protein GIT1.